We begin with the raw amino-acid sequence, 88 residues long: Small muscular protein (88 aa).

The segment at 22–66 (MGAFRPGAGQPPRRKECTPEVEEGVPPTSDEEKKPIPGAKKLPGP) is disordered.

This sequence belongs to the SMPX family. As to expression, preferentially and abundantly expressed in heart and skeletal muscle.

Functionally, plays a role in the regulatory network through which muscle cells coordinate their structural and functional states during growth, adaptation, and repair. This chain is Small muscular protein (SMPX), found in Homo sapiens (Human).